The following is a 122-amino-acid chain: Phycocyanin PC645 alpha-2 subunit (122 aa).

(2R,3E)-phycocyanobilin-binding residues include Asp-54 and Arg-68. 4 residues coordinate mesobiliverdin: Cys-70, Lys-76, Glu-77, and Cys-92.

This sequence belongs to the phycoerythrin family. As to quaternary structure, heterotetramer of 2 different alpha chains and 2 identical beta chains which form 2 alpha-beta heterodimers within the heterotetramer. Post-translationally, contains two phycocyanobilin chromophores and one mesobiliverdin chromophore with binding mediated by both the alpha and beta subunits.

Its subcellular location is the plastid. It localises to the chloroplast thylakoid membrane. Functionally, light-harvesting photosynthetic tetrapyrrole chromophore-protein from the phycobiliprotein complex. In Chroomonas sp. (strain CCMP270), this protein is Phycocyanin PC645 alpha-2 subunit.